Reading from the N-terminus, the 458-residue chain is Nuclear transcription factor Y subunit gamma (458 aa).

Residues 305-315 (QQQFSQFTDGQ) are compositionally biased toward low complexity. The segment at 305-379 (QQQFSQFTDG…QQSSTSPPPS (75 aa)) is disordered. The segment covering 339 to 351 (TGNSTPCTSSLPT) has biased composition (polar residues).

Belongs to the NFYC/HAP5 subunit family. As to quaternary structure, heterotrimeric transcription factor composed of three components, NF-YA, NF-YB and NF-YC. NF-YB and NF-YC must interact and dimerize for NF-YA association and DNA binding.

The protein localises to the nucleus. In terms of biological role, component of the sequence-specific heterotrimeric transcription factor (NF-Y) which specifically recognizes a 5'-CCAAT-3' box motif found in the promoters of its target genes. NF-Y can function as both an activator and a repressor, depending on its interacting cofactors. The chain is Nuclear transcription factor Y subunit gamma (NFYC) from Homo sapiens (Human).